We begin with the raw amino-acid sequence, 420 residues long: UDP-N-acetylglucosamine 1-carboxyvinyltransferase (420 aa).

Phosphoenolpyruvate is bound at residue 22-23 (KN). Arg-93 contributes to the UDP-N-acetyl-alpha-D-glucosamine binding site. The Proton donor role is filled by Cys-117. Cys-117 is modified (2-(S-cysteinyl)pyruvic acid O-phosphothioketal). Residues 122–126 (RPVDL), Asp-307, and Val-329 each bind UDP-N-acetyl-alpha-D-glucosamine.

This sequence belongs to the EPSP synthase family. MurA subfamily.

The protein resides in the cytoplasm. The enzyme catalyses phosphoenolpyruvate + UDP-N-acetyl-alpha-D-glucosamine = UDP-N-acetyl-3-O-(1-carboxyvinyl)-alpha-D-glucosamine + phosphate. Its pathway is cell wall biogenesis; peptidoglycan biosynthesis. In terms of biological role, cell wall formation. Adds enolpyruvyl to UDP-N-acetylglucosamine. This is UDP-N-acetylglucosamine 1-carboxyvinyltransferase from Hahella chejuensis (strain KCTC 2396).